Reading from the N-terminus, the 350-residue chain is Twinfilin-1 (350 aa).

Ser-2 is subject to N-acetylserine. The region spanning 2–139 (SHQTGIQASE…SLHGYKKYLL (138 aa)) is the ADF-H 1 domain. 2 positions are modified to phosphoserine: Ser-143 and Ser-277. The ADF-H 2 domain maps to 177–313 (GVAFPISQEA…TADFLYEEVH (137 aa)). Position 309 is a phosphotyrosine (Tyr-309). Residues 316–350 (QHAHKQSFAKPKGPSGKRGIRRIIRGPAETEATTE) are disordered. Thr-349 is modified (phosphothreonine).

Belongs to the actin-binding proteins ADF family. Twinfilin subfamily. Interacts with G-actin; ADP-actin form and capping protein (CP). May also be able to interact with TWF2 and phosphoinositides, PI(4,5)P2. When bound to PI(4,5)P2, it is down-regulated. Interacts with ACTG1. In terms of processing, phosphorylated on serine and threonine residues.

It is found in the cytoplasm. The protein localises to the cytoskeleton. In terms of biological role, actin-binding protein involved in motile and morphological processes. Inhibits actin polymerization, likely by sequestering G-actin. By capping the barbed ends of filaments, it also regulates motility. Seems to play an important role in clathrin-mediated endocytosis and distribution of endocytic organelles. The polypeptide is Twinfilin-1 (TWF1) (Bos taurus (Bovine)).